We begin with the raw amino-acid sequence, 416 residues long: Serine/threonine transporter SstT (416 aa).

Helical transmembrane passes span G14–S34, F43–L63, V82–F102, A141–L161, I192–G212, L220–I240, M298–V318, A339–I359, and V363–T383.

The protein belongs to the dicarboxylate/amino acid:cation symporter (DAACS) (TC 2.A.23) family.

The protein resides in the cell inner membrane. It catalyses the reaction L-serine(in) + Na(+)(in) = L-serine(out) + Na(+)(out). The catalysed reaction is L-threonine(in) + Na(+)(in) = L-threonine(out) + Na(+)(out). Its function is as follows. Involved in the import of serine and threonine into the cell, with the concomitant import of sodium (symport system). This Laribacter hongkongensis (strain HLHK9) protein is Serine/threonine transporter SstT.